The following is a 167-amino-acid chain: Single-stranded DNA-binding protein 2 (167 aa).

The region spanning 1 to 104 (MLNRVVLVGR…VVCDSVQFLE (104 aa)) is the SSB domain. The segment at 107–167 (NAQQNGGQRQ…IDISDDDLPF (61 aa)) is disordered. 2 stretches are compositionally biased toward low complexity: residues 109-118 (QQNGGQRQQN) and 132-147 (SGQN…TKQS). Positions 162–167 (DDDLPF) match the Important for interaction with partner proteins motif.

As to quaternary structure, homotetramer.

Its function is as follows. Plays an important role in DNA replication, recombination and repair. Binds to ssDNA and to an array of partner proteins to recruit them to their sites of action during DNA metabolism. This chain is Single-stranded DNA-binding protein 2 (ssb2), found in Staphylococcus aureus (strain MSSA476).